The chain runs to 431 residues: Tryptophan synthase beta chain 2 (431 aa).

At lysine 111 the chain carries N6-(pyridoxal phosphate)lysine.

Belongs to the TrpB family. Tetramer of two alpha and two beta chains. Requires pyridoxal 5'-phosphate as cofactor.

It catalyses the reaction (1S,2R)-1-C-(indol-3-yl)glycerol 3-phosphate + L-serine = D-glyceraldehyde 3-phosphate + L-tryptophan + H2O. Its pathway is amino-acid biosynthesis; L-tryptophan biosynthesis; L-tryptophan from chorismate: step 5/5. Functionally, the beta subunit is responsible for the synthesis of L-tryptophan from indole and L-serine. The protein is Tryptophan synthase beta chain 2 (trpB2) of Sulfurisphaera tokodaii (strain DSM 16993 / JCM 10545 / NBRC 100140 / 7) (Sulfolobus tokodaii).